Here is a 262-residue protein sequence, read N- to C-terminus: Indole-3-glycerol phosphate synthase (262 aa).

Belongs to the TrpC family.

It carries out the reaction 1-(2-carboxyphenylamino)-1-deoxy-D-ribulose 5-phosphate + H(+) = (1S,2R)-1-C-(indol-3-yl)glycerol 3-phosphate + CO2 + H2O. Its pathway is amino-acid biosynthesis; L-tryptophan biosynthesis; L-tryptophan from chorismate: step 4/5. This Chlorobium luteolum (strain DSM 273 / BCRC 81028 / 2530) (Pelodictyon luteolum) protein is Indole-3-glycerol phosphate synthase.